The sequence spans 387 residues: MDSQARIQANLRHIQAFEAKPNPKALPETAVTRGFEKVAFPKLVRELTCDNAVVRKKSLLAARELLSSPVNHVQCVAAGATPAIVALLQDQTDDETRYYAAGTLKLLAAKEVGARDLAQHSGLDALAAALEDPSEGVRDEAYGALIEAARFDSTRRALEACGSGAVLPRLMELALLEAQGGAAGRAQQGLVLLFTCTQARHNAGILSQLVDVAQAIPHLAGLLKPELPMPVRHAAAELLGALATREDAKIQAVQVGAVPLLLLAASPSVPVPFATSAVAALGAITIRREGKYAALESPGGLAGLVSVLDPCHEQLCINAMTAVSNVAEAPEARAILVASGAGPKLQHIFETATVEVVKRAAAQAIRQCRFKHLPYEVLPGAPPINEE.

ARM repeat units follow at residues 24–67 (KALP…ELLS), 69–109 (PVNH…LLAA), 111–150 (EVGA…EAAR), 154–198 (TRRA…TCTQ), 204–244 (GILS…ALAT), 245–286 (REDA…AITI), 289–328 (EGKY…NVAE), and 330–370 (PEAR…QCRF).

This sequence belongs to the flagellar radial spoke RSP14 family.

It localises to the cytoplasm. It is found in the cytoskeleton. The protein resides in the flagellum axoneme. This chain is Radial spoke protein 14 (RSP14), found in Chlamydomonas reinhardtii (Chlamydomonas smithii).